Reading from the N-terminus, the 424-residue chain is CinA-like protein (424 aa).

This sequence belongs to the CinA family.

This is CinA-like protein from Shewanella sediminis (strain HAW-EB3).